The sequence spans 476 residues: Cardiolipin synthase (476 aa).

Helical transmembrane passes span 2–22 (HLLI…IIFI) and 31–51 (WAWI…YILF). 2 PLD phosphodiesterase domains span residues 207 to 234 (INYR…GDEY) and 389 to 416 (EKGF…DIRS). Active-site residues include histidine 212, lysine 214, aspartate 219, histidine 394, lysine 396, and aspartate 401.

It belongs to the phospholipase D family. Cardiolipin synthase subfamily.

Its subcellular location is the cell membrane. It carries out the reaction 2 a 1,2-diacyl-sn-glycero-3-phospho-(1'-sn-glycerol) = a cardiolipin + glycerol. Its function is as follows. Catalyzes the reversible phosphatidyl group transfer from one phosphatidylglycerol molecule to another to form cardiolipin (CL) (diphosphatidylglycerol) and glycerol. The protein is Cardiolipin synthase (cls) of Clostridium perfringens (strain SM101 / Type A).